Reading from the N-terminus, the 533-residue chain is Calcium-dependent protein kinase 12 (533 aa).

Residues 1–77 form a disordered region; sequence MGNCFTKTYE…RASGGGGEMG (77 aa). A lipid anchor (N-myristoyl glycine) is attached at Gly-2. The span at 26 to 38 shows a compositional bias: basic and acidic residues; it reads ERSKARGGDEPGT. The span at 57–69 shows a compositional bias: low complexity; it reads GSSSAAGALSRRA. Positions 91–349 constitute a Protein kinase domain; that stretch reads YQLDRKLGSG…ASQALEHRWL (259 aa). Residues 97–105 and Lys-120 each bind ATP; that span reads LGSGQFGTT. Asp-215 serves as the catalytic Proton acceptor. The interval 354–384 is autoinhibitory domain; that stretch reads ASDRPIDSAVLSRMKQFKAMNKLKQLALKVI. 4 EF-hand domains span residues 391–426, 427–462, 463–498, and 499–533; these read EEIKGLKQMFNNMDTDRSGTITVEELKVGLTKLGSR, ISEAEVQKLMEAVDVDKSGSIDYSEFLTAMINKHKL, EKEEDLLRAFQHFDKDNSGYITRDELEQAMAEYGMG, and DEANIKQVLDEVDKDKDGRIDYEEFVEMMRKGIQT. Asp-404, Asp-406, Ser-408, Thr-410, Glu-415, Asp-440, Asp-442, Ser-444, Ser-446, Glu-451, Asp-476, Asp-478, Ser-480, Tyr-482, Glu-487, Asp-511, Asp-513, Asp-515, Arg-517, and Glu-522 together coordinate Ca(2+).

This sequence belongs to the protein kinase superfamily. Ser/Thr protein kinase family. CDPK subfamily. In terms of tissue distribution, expressed in roots, leaf blades and developing seeds. Expressed in vascular tissues of roots and leaf blades. Expressed in the phloem tissue of the large vascular bundle in leaf blades.

It is found in the membrane. The enzyme catalyses L-seryl-[protein] + ATP = O-phospho-L-seryl-[protein] + ADP + H(+). It catalyses the reaction L-threonyl-[protein] + ATP = O-phospho-L-threonyl-[protein] + ADP + H(+). With respect to regulation, activated by calcium. Autophosphorylation may play an important role in the regulation of the kinase activity. Functionally, may play a role in signal transduction pathways that involve calcium as a second messenger. Functions in signal transduction pathways that positively regulate responses to low-nitrogen. Functions in multiple signaling pathways, positively regulating salt tolerance and negatively modulating rice blast fungus resistance. May promote tolerance to salt stress by negatively regulating NADPH oxidase and positively regulating reactive oxygen species (ROS) scavengers. The chain is Calcium-dependent protein kinase 12 from Oryza sativa subsp. japonica (Rice).